Consider the following 450-residue polypeptide: MNEILNTKDINTIGEFFIETWGCQMNEEDSEKLSGMLKKEGYIRTEERENADVIIFNTCCVRENAELKVYGNLGILKGLKSKNPNLIIAVTGCMMQQKGMAETIKKKFPFVDIIIGTHNLHNFPNYLNEVKKKDTSVLKIQEKEDSIIENMPIDRKNSMKAFVTIMYGCNNFCTYCIVPYVRGRERSRTPENIEAEIKKLISEGYKEITLLGQNVNSYGKDLEPNVTFAELLKRVNNIEGLERVRFMTSHPKDLTDDVIEAIAKCDKLCEQIHLPVQSGSSEILKKMNRHYDREKYLDVVSKIKKLIPNVALSTDIIVGFPGETEKDFEETLSLVKEVEYDSAFTFLYSIRKGTPAAKFEDQVPEDVKHKRFNRLVEVVNEISAKKNKAYEGKIEEVLVEGTSKNDENKLMGRTRTGKLVNFIGDKDSIGEFVNVKIIKANSFSLTGEEI.

The MTTase N-terminal domain maps to 14–132; sequence GEFFIETWGC…FPNYLNEVKK (119 aa). The [4Fe-4S] cluster site is built by C23, C59, C93, C169, C173, and C176. The Radical SAM core domain occupies 155 to 385; it reads RKNSMKAFVT…VEVVNEISAK (231 aa). Residues 388 to 450 enclose the TRAM domain; the sequence is KAYEGKIEEV…NSFSLTGEEI (63 aa).

The protein belongs to the methylthiotransferase family. MiaB subfamily. Monomer. [4Fe-4S] cluster is required as a cofactor.

It localises to the cytoplasm. It catalyses the reaction N(6)-dimethylallyladenosine(37) in tRNA + (sulfur carrier)-SH + AH2 + 2 S-adenosyl-L-methionine = 2-methylsulfanyl-N(6)-dimethylallyladenosine(37) in tRNA + (sulfur carrier)-H + 5'-deoxyadenosine + L-methionine + A + S-adenosyl-L-homocysteine + 2 H(+). Catalyzes the methylthiolation of N6-(dimethylallyl)adenosine (i(6)A), leading to the formation of 2-methylthio-N6-(dimethylallyl)adenosine (ms(2)i(6)A) at position 37 in tRNAs that read codons beginning with uridine. This Clostridium botulinum (strain Langeland / NCTC 10281 / Type F) protein is tRNA-2-methylthio-N(6)-dimethylallyladenosine synthase.